Here is a 231-residue protein sequence, read N- to C-terminus: Monothiol glutaredoxin-6 (231 aa).

An N-terminal signal peptide occupies residues 1–29 (MIPSNKRNARILSITTLLLLLVFFVAQNA). The 104-residue stretch at 116-219 (QKEYSLILDL…ESLQVWSDGK (104 aa)) folds into the Glutaredoxin domain. [2Fe-2S] cluster is bound at residue Cys-136.

This sequence belongs to the glutaredoxin family. Monothiol subfamily.

Its subcellular location is the vacuole. This chain is Monothiol glutaredoxin-6 (GRX6), found in Saccharomyces cerevisiae (strain ATCC 204508 / S288c) (Baker's yeast).